Consider the following 1023-residue polypeptide: Sodium/potassium-transporting ATPase subunit alpha-1 (1023 aa).

Positions 1-5 (MGYGA) are excised as a propeptide. Over residues 1 to 11 (MGYGAGRDKYE) the composition is skewed to basic and acidic residues. A disordered region spans residues 1–34 (MGYGAGRDKYEPAATSEHGGKKGKGKGKDRDMEE). The Cytoplasmic segment spans residues 6–87 (GRDKYEPAAT…NALTPPPTTP (82 aa)). Position 15 is a phosphothreonine; by PKC (threonine 15). A Phosphoserine; by PKC modification is found at serine 16. Positions 82-84 (PPP) are interaction with phosphoinositide-3 kinase. Residues 88–108 (EWVKFCRQLFGGFSMLLWIGA) traverse the membrane as a helical segment. Over 109-131 (ILCFLAYGIRKASDLEPDNDNLY) the chain is Extracellular. Residues 132–152 (LGVVLSAVVIITGCFSYYQEA) form a helical membrane-spanning segment. The Cytoplasmic portion of the chain corresponds to 153-288 (KSSRIMESFK…GGQTPIAVEI (136 aa)). Positions 215-235 (NSSLTGESEPQTRSPDFTNEN) are disordered. A helical membrane pass occupies residues 289-308 (GHFIHIITGVAVFLGVSFFI). Residues 309 to 320 (LSLILHYTWLEA) are Extracellular-facing. The chain crosses the membrane as a helical span at residues 321–338 (VIFLIGIIVANVPEGLLA). Residues 339-772 (TVTVCLTLTA…EEGRLIFDNL (434 aa)) lie on the Cytoplasmic side of the membrane. The active-site 4-aspartylphosphate intermediate is the aspartate 376. Lysine 487 is an ATP binding site. Mg(2+)-binding residues include aspartate 717 and aspartate 721. The chain crosses the membrane as a helical span at residues 773 to 792 (KKSIAYTLTSNIPEITPFLI). Residues 793 to 802 (FIIADIPLPL) lie on the Extracellular side of the membrane. A helical transmembrane segment spans residues 803–823 (GTVTILCIDLGTDMVPAISLA). The Cytoplasmic portion of the chain corresponds to 824 to 843 (YEQAESDIMKRQPRNPKKDK). A helical transmembrane segment spans residues 844 to 866 (LVNERLISMAYGQIGMIQALGGF). Residues 867–918 (FAYFVILAENGFLPSTLLGIRVAWEDRYVNDVEDSYGQQWTYEQRKIVEFTC) are Extracellular-facing. A helical membrane pass occupies residues 919 to 938 (HTAFFVSIVVVQWADLIICK). Over 939–951 (TRRNSVFQQGMKN) the chain is Cytoplasmic. Phosphoserine; by PKA is present on serine 943. A helical transmembrane segment spans residues 952–970 (KILIFGLFEETALAAFLSY). Topologically, residues 971–985 (CPGMDVALRMYPLKP) are extracellular. The chain crosses the membrane as a helical span at residues 986–1006 (TWWFCAFPYSLLIFIYDEVRK). At 1007–1023 (LILRRSPGGWVEKETYY) the chain is on the cytoplasmic side.

This sequence belongs to the cation transport ATPase (P-type) (TC 3.A.3) family. Type IIC subfamily. As to quaternary structure, the sodium/potassium-transporting ATPase is composed of a catalytic alpha subunit, an auxiliary non-catalytic beta subunit and an additional regulatory subunit. Mainly expressed in kidney. Found in bladder, colon, eye, and testis. Found in low levels in brain, heart, spleen and liver.

Its subcellular location is the cell membrane. The protein localises to the sarcolemma. The enzyme catalyses K(+)(out) + Na(+)(in) + ATP + H2O = K(+)(in) + Na(+)(out) + ADP + phosphate + H(+). Its activity is regulated as follows. This alpha subunit is resistant to ouabain. Its function is as follows. This is the catalytic component of the active enzyme, which catalyzes the hydrolysis of ATP coupled with the exchange of sodium and potassium ions across the plasma membrane. This action creates the electrochemical gradient of sodium and potassium ions, providing the energy for active transport of various nutrients. The protein is Sodium/potassium-transporting ATPase subunit alpha-1 (ATP1A1) of Rhinella marina (Cane toad).